A 298-amino-acid polypeptide reads, in one-letter code: UDP-3-O-acyl-N-acetylglucosamine deacetylase (298 aa).

Positions 75, 232, and 236 each coordinate Zn(2+). The active-site Proton donor is H259.

This sequence belongs to the LpxC family. Zn(2+) serves as cofactor.

The enzyme catalyses a UDP-3-O-[(3R)-3-hydroxyacyl]-N-acetyl-alpha-D-glucosamine + H2O = a UDP-3-O-[(3R)-3-hydroxyacyl]-alpha-D-glucosamine + acetate. It participates in glycolipid biosynthesis; lipid IV(A) biosynthesis; lipid IV(A) from (3R)-3-hydroxytetradecanoyl-[acyl-carrier-protein] and UDP-N-acetyl-alpha-D-glucosamine: step 2/6. In terms of biological role, catalyzes the hydrolysis of UDP-3-O-myristoyl-N-acetylglucosamine to form UDP-3-O-myristoylglucosamine and acetate, the committed step in lipid A biosynthesis. The sequence is that of UDP-3-O-acyl-N-acetylglucosamine deacetylase from Wolinella succinogenes (strain ATCC 29543 / DSM 1740 / CCUG 13145 / JCM 31913 / LMG 7466 / NCTC 11488 / FDC 602W) (Vibrio succinogenes).